Reading from the N-terminus, the 825-residue chain is Heterogeneous nuclear ribonucleoprotein U (825 aa).

Ser2 is modified (N-acetylserine; partial). Ser4 bears the Phosphoserine mark. The SAP domain maps to 8–42; that stretch reads VKKLKVSELKEELKKRRLSDKGLKAELMERLQAAL. 2 positions are modified to N6-acetyllysine: Lys17 and Lys21. The tract at residues 41–281 is disordered; it reads ALDDEEAGGR…PQPPVEEEDE (241 aa). Ser59 bears the Phosphoserine; by PLK1 mark. The residue at position 66 (Ser66) is a Phosphoserine. The span at 72–81 shows a compositional bias: low complexity; the sequence is AGLEQEAAAG. 3 stretches are compositionally biased toward acidic residues: residues 82–95, 120–134, and 140–153; these read GDEE…EEEG, PMEE…ENGD, and EGED…EGAG. A compositionally biased stretch (low complexity) spans 159-178; the sequence is GEQQPQPPATQQQQPQQQRG. The residue at position 186 (Lys186) is an N6-acetyllysine. Position 187 is an ADP-ribosylserine (Ser187). Residues 199-211 show a composition bias toward low complexity; it reads APPGARQGQQQAG. Lys215 is modified (N6-acetyllysine). Residues 233–266 show a composition bias toward basic and acidic residues; sequence GKTEQKGGDKKRGVKRPREDHGRGYFEYIEENKY. Arg255 bears the Citrulline mark. The residue at position 265 (Lys265) is an N6-acetyllysine; alternate. Lys265 is covalently cross-linked (Glycyl lysine isopeptide (Lys-Gly) (interchain with G-Cter in SUMO1); alternate). Lys265 participates in a covalent cross-link: Glycyl lysine isopeptide (Lys-Gly) (interchain with G-Cter in SUMO2); alternate. A Phosphotyrosine modification is found at Tyr266. Phosphoserine occurs at positions 267 and 271. The B30.2/SPRY domain occupies 267 to 464; that stretch reads SRAKSPQPPV…VEFNFGQKEK (198 aa). Thr286 carries the phosphothreonine modification. Lys352 carries the N6-acetyllysine modification. An ATPase domain region spans residues 488 to 672; the sequence is PKGPEEKKDC…QKLLEQYKEE (185 aa). Lys495 participates in a covalent cross-link: Glycyl lysine isopeptide (Lys-Gly) (interchain with G-Cter in SUMO2). 504-511 is an ATP binding site; that stretch reads GLPGAGKT. N6-acetyllysine; alternate occurs at positions 516 and 524. Glycyl lysine isopeptide (Lys-Gly) (interchain with G-Cter in SUMO2); alternate cross-links involve residues Lys516 and Lys524. Thr532 carries the post-translational modification Phosphothreonine. Lys536 is covalently cross-linked (Glycyl lysine isopeptide (Lys-Gly) (interchain with G-Cter in SUMO2)). Lys551 is subject to N6-acetyllysine. At Lys565 the chain carries N6-acetyllysine; alternate. Residue Lys565 forms a Glycyl lysine isopeptide (Lys-Gly) (interchain with G-Cter in SUMO2); alternate linkage. Lys574 is covalently cross-linked (Glycyl lysine isopeptide (Lys-Gly) (interchain with G-Cter in SUMO2)). Phosphothreonine is present on Thr582. Residues Lys609 and Lys626 each participate in a glycyl lysine isopeptide (Lys-Gly) (interchain with G-Cter in SUMO2) cross-link. The segment at 611–626 is actin-binding; the sequence is EDYKQRTQKKAEVEGK. Lys635 is modified (N6-acetyllysine; alternate). Residue Lys635 forms a Glycyl lysine isopeptide (Lys-Gly) (interchain with G-Cter in SUMO2); alternate linkage. Residues Lys664 and Lys670 each participate in a glycyl lysine isopeptide (Lys-Gly) (interchain with G-Cter in SUMO2) cross-link. Over residues 671-683 the composition is skewed to basic and acidic residues; sequence EESKKALPPEKKQ. A disordered region spans residues 671 to 749; that stretch reads EESKKALPPE…GGGGGGSGGI (79 aa). Position 702 is an omega-N-methylarginine (Arg702). Residues 710 to 728 show a composition bias toward gly residues; sequence GGFNMRGGNFRGGAPGNRG. Residues 714–739 form an RNA-binding RGG-box region; it reads MRGGNFRGGAPGNRGGYNRRGNMPQR. Arg715, Arg720, and Arg727 each carry asymmetric dimethylarginine. An asymmetric dimethylarginine; alternate mark is found at Arg733 and Arg739. 2 positions are modified to omega-N-methylarginine; alternate: Arg733 and Arg739. Arg739 carries the dimethylated arginine; in A2780 ovarian carcinoma cell line modification. The segment covering 739-749 has biased composition (gly residues); that stretch reads RGGGGGGSGGI. An asymmetric dimethylarginine mark is found at Arg755 and Arg762. The disordered stretch occupies residues 769 to 799; it reads GNYNRGGMPNRGNYNQNFRGRGNNRGYKNQS. Over residues 778-799 the composition is skewed to low complexity; the sequence is NRGNYNQNFRGRGNNRGYKNQS. N6-acetyllysine; alternate is present on Lys814. Lys814 participates in a covalent cross-link: Glycyl lysine isopeptide (Lys-Gly) (interchain with G-Cter in SUMO2); alternate.

In terms of assembly, oligomer (via ATPase domain and RNA-binding RGG-box region); oligomerization occurs upon ATP-binding in a chromatin-associated RNAs (caRNAs)- and transcription-dependent manner and is required for chromatin decompaction. ATP hydrolysis is required to cycle from an oligomeric to monomeric state to compact chromatin. Component of the coding region determinant (CRD)-mediated complex, composed of DHX9, HNRNPU, IGF2BP1, SYNCRIP and YBX1. Identified in the spliceosome C complex. Identified in a IGF2BP1-dependent mRNP granule complex containing untranslated mRNAs. Associates with heterogeneous nuclear ribonucleoprotein (hnRNP) particles. Associates (via middle region) with the C-terminal domain (CTD) RNA polymerase II (Pol II) holoenzyme; this association occurs in a RNA-independent manner. Associates (via middle region) with the core-TFIIH basal transcription factor complex; this association inhibits the CTD phosphorylation of RNA polymerase II holoenzyme by down-regulating TFIIH kinase activity. Associates with the telomerase holoenzyme complex. Associates with spindle microtubules (MTs) in a TPX2-dependent manner. Interacts (via C-terminus) with actin; this interaction is direct and mediates association with the phosphorylated CTD of RNA polymerase II and is disrupted in presence of the long non-coding H19 RNA. Interacts with AURKA. Interacts (via C-terminus) with CBX5; this interaction is, at least in part, RNA-dependent. Interacts with CR2. Interacts with CRY1. Interacts (via C-terminus) with EP300; this interaction enhances DNA-binding to nuclear scaffold/matrix attachment region (S/MAR) elements. Interacts with ERBB4. Interacts with GEMIN5. Interacts with IGF2BP1. Interacts with IGF2BP2 and IGF2BP3. Interacts with NCL; this interaction occurs during mitosis. Interacts (via C-terminus) with NR3C1 (via C-terminus). Interacts with PLK1; this interaction induces phosphorylation of HNRNPU at Ser-59 in mitosis. Interacts with POU3F4. Interacts with SMARCA4; this interaction occurs in embryonic stem cells and stimulates global Pol II-mediated transcription. Interacts (via C-terminus) with TOP2A; this interaction protects the topoisomerase TOP2A from degradation and positively regulates the relaxation of supercoiled DNA by TOP2A in a RNA-dependent manner. Interacts with TPX2; this interaction recruits HNRNPU to spindle microtubules (MTs). Interacts with UBQLN2. Interacts (via RNA-binding RGG-box region) with ZBTB7B; the interaction facilitates the recruitment of long non-coding RNA Blnc1 by ZBTB7B. Interacts with ERCC6. As to quaternary structure, (Microbial infection) Interacts with HIV-1 protein Rev. Cleaved at Asp-100 by CASP3 during T-cell apoptosis, resulting in a loss of DNA- and chromatin-binding activities. In terms of processing, extensively phosphorylated. Phosphorylated on Ser-59 by PLK1 and dephosphorylated by protein phosphatase 2A (PP2A) in mitosis. Post-translationally, arg-739 is dimethylated, probably to asymmetric dimethylarginine. Arg-733 is dimethylated, probably to asymmetric dimethylarginine. Citrullinated by PADI4. As to expression, widely expressed.

The protein localises to the nucleus. Its subcellular location is the nucleus matrix. The protein resides in the chromosome. It localises to the nucleus speckle. It is found in the cytoplasm. The protein localises to the cytoskeleton. Its subcellular location is the microtubule organizing center. The protein resides in the centrosome. It localises to the centromere. It is found in the kinetochore. The protein localises to the spindle. Its subcellular location is the spindle pole. The protein resides in the midbody. It localises to the cell surface. It is found in the cytoplasmic granule. In terms of biological role, DNA- and RNA-binding protein involved in several cellular processes such as nuclear chromatin organization, telomere-length regulation, transcription, mRNA alternative splicing and stability, Xist-mediated transcriptional silencing and mitotic cell progression. Plays a role in the regulation of interphase large-scale gene-rich chromatin organization through chromatin-associated RNAs (caRNAs) in a transcription-dependent manner, and thereby maintains genomic stability. Required for the localization of the long non-coding Xist RNA on the inactive chromosome X (Xi) and the subsequent initiation and maintenance of X-linked transcriptional gene silencing during X-inactivation. Plays a role as a RNA polymerase II (Pol II) holoenzyme transcription regulator. Promotes transcription initiation by direct association with the core-TFIIH basal transcription factor complex for the assembly of a functional pre-initiation complex with Pol II in a actin-dependent manner. Blocks Pol II transcription elongation activity by inhibiting the C-terminal domain (CTD) phosphorylation of Pol II and dissociates from Pol II pre-initiation complex prior to productive transcription elongation. Positively regulates CBX5-induced transcriptional gene silencing and retention of CBX5 in the nucleus. Negatively regulates glucocorticoid-mediated transcriptional activation. Key regulator of transcription initiation and elongation in embryonic stem cells upon leukemia inhibitory factor (LIF) signaling. Involved in the long non-coding RNA H19-mediated Pol II transcriptional repression. Participates in the circadian regulation of the core clock component BMAL1 transcription. Plays a role in the regulation of telomere length. Plays a role as a global pre-mRNA alternative splicing modulator by regulating U2 small nuclear ribonucleoprotein (snRNP) biogenesis. Plays a role in mRNA stability. Component of the CRD-mediated complex that promotes MYC mRNA stabilization. Enhances the expression of specific genes, such as tumor necrosis factor TNFA, by regulating mRNA stability, possibly through binding to the 3'-untranslated region (UTR). Plays a role in mitotic cell cycle regulation. Involved in the formation of stable mitotic spindle microtubules (MTs) attachment to kinetochore, spindle organization and chromosome congression. Phosphorylation at Ser-59 by PLK1 is required for chromosome alignement and segregation and progression through mitosis. Also contributes to the targeting of AURKA to mitotic spindle MTs. Binds to double- and single-stranded DNA and RNA, poly(A), poly(C) and poly(G) oligoribonucleotides. Binds to chromatin-associated RNAs (caRNAs). Associates with chromatin to scaffold/matrix attachment region (S/MAR) elements in a chromatin-associated RNAs (caRNAs)-dependent manner. Binds to the Xist RNA. Binds the long non-coding H19 RNA. Binds to SMN1/2 pre-mRNAs at G/U-rich regions. Binds to small nuclear RNAs (snRNAs). Binds to the 3'-UTR of TNFA mRNA. Binds (via RNA-binding RGG-box region) to the long non-coding Xist RNA; this binding is direct and bridges the Xist RNA and the inactive chromosome X (Xi). Also negatively regulates embryonic stem cell differentiation upon LIF signaling. Required for embryonic development. Binds to brown fat long non-coding RNA 1 (Blnc1); facilitates the recruitment of Blnc1 by ZBTB7B required to drive brown and beige fat development and thermogenesis. (Microbial infection) Negatively regulates immunodeficiency virus type 1 (HIV-1) replication by preventing the accumulation of viral mRNA transcripts in the cytoplasm. This Homo sapiens (Human) protein is Heterogeneous nuclear ribonucleoprotein U.